Reading from the N-terminus, the 378-residue chain is Alpha-(1,3)-fucosyltransferase fut-5 (378 aa).

At 1–7 the chain is on the cytoplasmic side; it reads MKHNTLR. The helical; Signal-anchor for type II membrane protein transmembrane segment at 8–28 threads the bilayer; the sequence is AVFQFSFFIGICTFIMIAGYS. Residues 29–378 are Lumenal-facing; that stretch reads YQINYNQRMG…CDNSFATRFL (350 aa). Asn-44, Asn-88, Asn-105, Asn-143, Asn-171, and Asn-307 each carry an N-linked (GlcNAc...) asparagine glycan.

Belongs to the glycosyltransferase 10 family. Ca(2+) is required as a cofactor. N-glycosylated.

Its subcellular location is the golgi apparatus. It localises to the golgi stack membrane. The enzyme catalyses a beta-D-galactosyl-(1-&gt;3)-N-acetyl-beta-D-glucosaminyl derivative + GDP-beta-L-fucose = a beta-D-galactosyl-(1-&gt;3)-[alpha-L-fucosyl-(1-&gt;4)]-N-acetyl-beta-D-glucosaminyl derivative + GDP + H(+). It functions in the pathway protein modification; protein glycosylation. Its activity is regulated as follows. Inhibited by Cu(2+) and Ni(2+), and to a lesser extent by EDTA, Mn(2+) and Mg(2+). Its function is as follows. Catalyzes the addition of fucose in alpha 1-3 linkage to GalNAc-beta-1-&gt;4-GlcNAc-beta-1-&gt;3-Gal-beta-1-&gt;4-Glc (LDNT)acceptor. Unlike fut-1, does not add fucose to Man-alpha-1-&gt;3-(Man-alpha-1-&gt;6)-Man-beta-1-&gt;4-GlcNAc-beta-1-&gt;4-GlcNAc-beta-1-Asn (M3), Man-alpha-1-&gt;3-(Man-alpha-1-&gt;6)-Man-beta-1-&gt;4-GlcNAc-beta-1-&gt;4-(Fuc-alpha-1-&gt;6)-GlcNAc-beta-1-Asn (M3F6) or GlcNAc-beta-1-&gt;2-Man-alpha-1-&gt;3-(GlcNAc-beta-1-&gt;2-Man-alpha-1-&gt;6)-Man-beta-1-4-GlcNAc-beta-1-&gt;4-(Fuc-alpha-1-&gt;6)-GlcNAc-beta-1-Asn (GnM3F6) acceptors. The chain is Alpha-(1,3)-fucosyltransferase fut-5 from Caenorhabditis elegans.